The following is a 645-amino-acid chain: 1-phosphatidylinositol 4,5-bisphosphate phosphodiesterase zeta-1 (645 aa).

In terms of domain architecture, EF-hand spans 42 to 77 (CHFAHVKRIFKENDRHNQGRITTEDFRTIYRCIVHR). In terms of domain architecture, PI-PLC X-box spans 162-306 (QDMNKPLNDY…LKFKILVKNK (145 aa)). Catalysis depends on residues H177 and H222. The 117-residue stretch at 385–501 (LSDLVIYTKA…GYVLKPDFLR (117 aa)) folds into the PI-PLC Y-box domain. Residues 501–625 (RDTTLGFNPN…KGYRRVPLFS (125 aa)) form the C2 domain.

In terms of assembly, interacts via its C2 domain with PtdIns(3)P and, to a lesser extent, PtdIns(5)P in vitro. Ca(2+) serves as cofactor.

It localises to the nucleus. It is found in the cytoplasm. The protein resides in the perinuclear region. It catalyses the reaction a 1,2-diacyl-sn-glycero-3-phospho-(1D-myo-inositol-4,5-bisphosphate) + H2O = 1D-myo-inositol 1,4,5-trisphosphate + a 1,2-diacyl-sn-glycerol + H(+). In terms of biological role, the production of the second messenger molecules diacylglycerol (DAG) and inositol 1,4,5-trisphosphate (IP3) is mediated by activated phosphatidylinositol-specific phospholipase C enzymes. In vitro, hydrolyzes PtdIns(4,5)P2 in a Ca(2+)-dependent manner. Triggers intracellular Ca(2+) oscillations in oocytes solely during M phase and is involved in inducing oocyte activation and initiating embryonic development up to the blastocyst stage. Is therefore a strong candidate for the egg-activating soluble sperm factor that is transferred from the sperm into the egg cytoplasm following gamete membrane fusion. May exert an inhibitory effect on phospholipase-C-coupled processes that depend on calcium ions and protein kinase C, including CFTR trafficking and function. This Rattus norvegicus (Rat) protein is 1-phosphatidylinositol 4,5-bisphosphate phosphodiesterase zeta-1.